Consider the following 61-residue polypeptide: Small ribosomal subunit protein uS14 (61 aa).

4 residues coordinate Zn(2+): Cys-24, Cys-27, Cys-40, and Cys-43.

The protein belongs to the universal ribosomal protein uS14 family. Zinc-binding uS14 subfamily. In terms of assembly, part of the 30S ribosomal subunit. Contacts proteins S3 and S10. Zn(2+) is required as a cofactor.

Binds 16S rRNA, required for the assembly of 30S particles and may also be responsible for determining the conformation of the 16S rRNA at the A site. The sequence is that of Small ribosomal subunit protein uS14 from Clostridioides difficile (strain 630) (Peptoclostridium difficile).